The following is a 254-amino-acid chain: Leucyl/phenylalanyl-tRNA--protein transferase (254 aa).

It belongs to the L/F-transferase family.

It is found in the cytoplasm. The catalysed reaction is N-terminal L-lysyl-[protein] + L-leucyl-tRNA(Leu) = N-terminal L-leucyl-L-lysyl-[protein] + tRNA(Leu) + H(+). It carries out the reaction N-terminal L-arginyl-[protein] + L-leucyl-tRNA(Leu) = N-terminal L-leucyl-L-arginyl-[protein] + tRNA(Leu) + H(+). It catalyses the reaction L-phenylalanyl-tRNA(Phe) + an N-terminal L-alpha-aminoacyl-[protein] = an N-terminal L-phenylalanyl-L-alpha-aminoacyl-[protein] + tRNA(Phe). In terms of biological role, functions in the N-end rule pathway of protein degradation where it conjugates Leu, Phe and, less efficiently, Met from aminoacyl-tRNAs to the N-termini of proteins containing an N-terminal arginine or lysine. This is Leucyl/phenylalanyl-tRNA--protein transferase from Burkholderia cenocepacia (strain HI2424).